A 367-amino-acid polypeptide reads, in one-letter code: Probable cysteine protease RD19D (367 aa).

The signal sequence occupies residues 1–22 (MVAKALAQLITCIILFCHVVAS). Residues 23 to 136 (VEDLTIRQVT…AEAPMVEVDG (114 aa)) constitute a propeptide, activation peptide. Asparagine 61 carries N-linked (GlcNAc...) asparagine glycosylation. Disulfide bonds link cysteine 158/cysteine 208 and cysteine 192/cysteine 241. Cysteine 161 is a catalytic residue. Residue asparagine 254 is glycosylated (N-linked (GlcNAc...) asparagine). Residues cysteine 297 and cysteine 352 are joined by a disulfide bond. Catalysis depends on residues histidine 304 and asparagine 331.

Belongs to the peptidase C1 family.

Its function is as follows. Probable thiol protease. This is Probable cysteine protease RD19D from Arabidopsis thaliana (Mouse-ear cress).